The sequence spans 108 residues: PTS system fructose-like EIIB component 1 (108 aa).

The region spanning 1 to 104 (MSKKLIALCA…IIKEIEEMIA (104 aa)) is the PTS EIIB type-2 domain. The active-site Phosphocysteine intermediate is Cys-11. Cys-11 carries the post-translational modification Phosphocysteine; by EIIA.

Its subcellular location is the cytoplasm. The enzyme catalyses D-fructose(out) + N(pros)-phospho-L-histidyl-[protein] = D-fructose 1-phosphate(in) + L-histidyl-[protein]. In terms of biological role, the phosphoenolpyruvate-dependent sugar phosphotransferase system (sugar PTS), a major carbohydrate active transport system, catalyzes the phosphorylation of incoming sugar substrates concomitantly with their translocation across the cell membrane. The enzyme II FryABC PTS system is involved in fructose transport. The sequence is that of PTS system fructose-like EIIB component 1 (fryB) from Escherichia coli O157:H7.